The primary structure comprises 226 residues: Cold-regulated 413 inner membrane protein 2, chloroplastic (226 aa).

A chloroplast-targeting transit peptide spans 1–76; that stretch reads MASLCLSSSR…RKRGSSVVCY (76 aa). At 77-79 the chain is on the stromal side; it reads ATP. Residues 80 to 100 form a helical membrane-spanning segment; sequence MLSVHNLQWISTISCVALMFA. Over 101–103 the chain is Chloroplast intermembrane; it reads RGT. The chain crosses the membrane as a helical span at residues 104–124; the sequence is GIHKSFVVPLFALQAPMGIVS. The Stromal segment spans residues 125 to 129; that stretch reads WMKGE. A helical transmembrane segment spans residues 130–150; the sequence is YGIWAAFLALLTRLFFSFPVE. Residues 151–152 lie on the Chloroplast intermembrane side of the membrane; it reads LE. A helical transmembrane segment spans residues 153 to 173; sequence LPFIALLLVIVAPYQVMSIRG. Topologically, residues 174–176 are stromal; sequence KQE. Residues 177–197 form a helical membrane-spanning segment; that stretch reads GAILSLAISCFLAFQHFSRAG. The Chloroplast intermembrane portion of the chain corresponds to 198–205; it reads TLQKAFDQ. Residues 206–226 traverse the membrane as a helical segment; it reads NSVLATVAIIGVTVVSFLFLI.

The protein belongs to the Cold-regulated 413 protein family.

It is found in the plastid. Its subcellular location is the chloroplast inner membrane. The chain is Cold-regulated 413 inner membrane protein 2, chloroplastic (COR413IM2) from Arabidopsis thaliana (Mouse-ear cress).